The following is a 356-amino-acid chain: uncharacterized protein (356 aa).

Positions Glu-25–Asn-72 are disordered. Residues Asn-31–Ser-50 are compositionally biased toward basic and acidic residues. The segment covering Asp-51–Phe-70 has biased composition (acidic residues). The stretch at Glu-328–Asn-356 forms a coiled coil.

This sequence belongs to the mimivirus L17/R827 family.

This is an uncharacterized protein from Acanthamoeba polyphaga mimivirus (APMV).